The following is a 276-amino-acid chain: Light-independent protochlorophyllide reductase iron-sulfur ATP-binding protein (276 aa).

Residues 12 to 17 and Lys41 each bind ATP; that span reads GIGKST. Ser16 serves as a coordination point for Mg(2+). [4Fe-4S] cluster is bound by residues Cys97 and Cys131. An ATP-binding site is contributed by 182-183; the sequence is NR.

This sequence belongs to the NifH/BchL/ChlL family. In terms of assembly, homodimer. Protochlorophyllide reductase is composed of three subunits; BchL, BchN and BchB. [4Fe-4S] cluster serves as cofactor.

It catalyses the reaction chlorophyllide a + oxidized 2[4Fe-4S]-[ferredoxin] + 2 ADP + 2 phosphate = protochlorophyllide a + reduced 2[4Fe-4S]-[ferredoxin] + 2 ATP + 2 H2O. It functions in the pathway porphyrin-containing compound metabolism; bacteriochlorophyll biosynthesis (light-independent). Its function is as follows. Component of the dark-operative protochlorophyllide reductase (DPOR) that uses Mg-ATP and reduced ferredoxin to reduce ring D of protochlorophyllide (Pchlide) to form chlorophyllide a (Chlide). This reaction is light-independent. The L component serves as a unique electron donor to the NB-component of the complex, and binds Mg-ATP. This is Light-independent protochlorophyllide reductase iron-sulfur ATP-binding protein from Chlorobaculum tepidum (strain ATCC 49652 / DSM 12025 / NBRC 103806 / TLS) (Chlorobium tepidum).